The primary structure comprises 275 residues: Aldo-keto reductase MSMEG_2408/MSMEI_2347 (275 aa).

The Proton donor role is filled by Tyr-49. 8 residues coordinate NADPH: Leu-189, Ile-227, Lys-229, Ser-230, Val-231, Arg-235, Ser-238, and Asn-239. Lys-262 participates in a covalent cross-link: Isoglutamyl lysine isopeptide (Lys-Gln) (interchain with Q-Cter in protein Pup).

The protein belongs to the aldo/keto reductase family.

In Mycolicibacterium smegmatis (strain ATCC 700084 / mc(2)155) (Mycobacterium smegmatis), this protein is Aldo-keto reductase MSMEG_2408/MSMEI_2347.